The following is a 490-amino-acid chain: Coagulation factor X (490 aa).

The N-terminal stretch at 1–20 is a signal peptide; it reads MANPLHLVLLGAALAGLLLS. The propeptide occupies 21–40; sequence GSSVFISRRAANDVLARTRR. The region spanning 41–85 is the Gla domain; that stretch reads ANSFLEELKKGNLERECMEENCSYEEALEVFEDREKTNEFWNKYV. Glu46, Glu47, Glu54, Glu56, Glu59, and Glu60 each carry 4-carboxyglutamate. A disulfide bridge connects residues Cys57 and Cys62. Asn61 carries N-linked (GlcNAc...) asparagine glycosylation. A 4-carboxyglutamate mark is found at Glu65, Glu66, Glu69, Glu72, Glu75, and Glu79. An EGF-like 1; calcium-binding domain is found at 86 to 122; sequence DGDQCESNPCQNQGTCKDGLGMYTCSCVEGYEGQDCE. Disulfide bonds link Cys90–Cys101, Cys95–Cys110, Cys112–Cys121, Cys129–Cys140, Cys136–Cys149, Cys151–Cys164, Cys172–Cys340, Cys239–Cys244, Cys259–Cys275, Cys388–Cys402, and Cys413–Cys441. The residue at position 103 (Asp103) is a (3R)-3-hydroxyaspartate. Residues 125-165 form the EGF-like 2 domain; that stretch reads TRKLCSLDNGGCDQFCKEEENSVLCSCASGYTLGDNGKSCI. The interval 183-230 is disordered; it reads SPATNSSEGPPEAPGPEQQDDGNLTATENPFNLLDSPEPPPEDDSSSL. A propeptide spans 184-232 (activation peptide); the sequence is PATNSSEGPPEAPGPEQQDDGNLTATENPFNLLDSPEPPPEDDSSSLVR. N-linked (GlcNAc...) asparagine glycosylation is found at Asn187 and Asn205. Over residues 203–212 the composition is skewed to polar residues; that stretch reads DGNLTATENP. One can recognise a Peptidase S1 domain in the interval 233-465; it reads IVGGQDCRDG…FLKWIEKSMR (233 aa). Catalysis depends on charge relay system residues His274 and Asp320. Ser417 functions as the Charge relay system in the catalytic mechanism.

Belongs to the peptidase S1 family. The two chains are formed from a single-chain precursor by the excision of two Arg residues and are held together by 1 or more disulfide bonds. Forms a heterodimer with SERPINA5. In terms of processing, the vitamin K-dependent, enzymatic carboxylation of some glutamate residues allows the modified protein to bind calcium. Post-translationally, N- and O-glycosylated. Proteolytically cleaved and activated by cathepsin CTSG. The activation peptide is cleaved by factor IXa (in the intrinsic pathway), or by factor VIIa (in the extrinsic pathway). In terms of processing, the iron and 2-oxoglutarate dependent 3-hydroxylation of aspartate and asparagine is (R) stereospecific within EGF domains.

The protein resides in the secreted. It carries out the reaction Selective cleavage of Arg-|-Thr and then Arg-|-Ile bonds in prothrombin to form thrombin.. Inhibited by SERPINA5. Factor Xa is a vitamin K-dependent glycoprotein that converts prothrombin to thrombin in the presence of factor Va, calcium and phospholipid during blood clotting. Factor Xa activates pro-inflammatory signaling pathways in a protease-activated receptor (PAR)-dependent manner. This chain is Coagulation factor X (F10), found in Oryctolagus cuniculus (Rabbit).